Reading from the N-terminus, the 90-residue chain is MAVKIRLTRMGSKKKPFYRINVADSRSPRDGRFIETVGTYNPLVAENQVTLKEDRILEWLGNGAQPSDTVRNILSKEGVLKKFHDSKYSK.

It belongs to the bacterial ribosomal protein bS16 family.

The chain is Small ribosomal subunit protein bS16 from Streptococcus sanguinis (strain SK36).